The sequence spans 825 residues: KH domain-containing protein YLL032C (825 aa).

The region spanning Pro-482–Leu-556 is the KH domain. Low complexity predominate over residues Ser-727–Asn-740. The tract at residues Ser-727–His-766 is disordered. Positions Phe-741 to Ser-762 are enriched in polar residues. Ser-762 is subject to Phosphoserine.

It localises to the cytoplasm. In Saccharomyces cerevisiae (strain ATCC 204508 / S288c) (Baker's yeast), this protein is KH domain-containing protein YLL032C.